The sequence spans 108 residues: Thiosulfate sulfurtransferase GlpE (108 aa).

One can recognise a Rhodanese domain in the interval 17 to 105 (RQGAAVLVDI…WHRRFPANVA (89 aa)). Cys-65 (cysteine persulfide intermediate) is an active-site residue.

This sequence belongs to the GlpE family.

The protein resides in the cytoplasm. It carries out the reaction thiosulfate + hydrogen cyanide = thiocyanate + sulfite + 2 H(+). The enzyme catalyses thiosulfate + [thioredoxin]-dithiol = [thioredoxin]-disulfide + hydrogen sulfide + sulfite + 2 H(+). Transferase that catalyzes the transfer of sulfur from thiosulfate to thiophilic acceptors such as cyanide or dithiols. May function in a CysM-independent thiosulfate assimilation pathway by catalyzing the conversion of thiosulfate to sulfite, which can then be used for L-cysteine biosynthesis. The chain is Thiosulfate sulfurtransferase GlpE from Salmonella agona (strain SL483).